The following is a 551-amino-acid chain: uncharacterized protein (551 aa).

Residues 1–36 constitute a mitochondrion transit peptide; sequence MMALVRDRRAHYVMSIVIRWVHCFSSSLRGTFGTRW. The stretch at 203–315 forms a coiled coil; the sequence is TNILLRKLKE…MDSRDRLREE (113 aa). A disordered region spans residues 354–389; the sequence is REASLSPWPKSPPSTTALRPHSATMSVSSAGAQKAK. A compositionally biased stretch (polar residues) spans 366 to 384; the sequence is PSTTALRPHSATMSVSSAG. Residues 405-439 are a coiled coil; that stretch reads KHGLESQIEALKANLENEKKKVERFRKEADRLNKS. The disordered stretch occupies residues 519–551; it reads LQLSPKGKLSESPKEESLEEPSMRQSSPAETVD. A compositionally biased stretch (polar residues) spans 541–551; that stretch reads MRQSSPAETVD.

As to quaternary structure, interacts with NOD2.

Its subcellular location is the mitochondrion. This is an uncharacterized protein from Homo sapiens (Human).